The primary structure comprises 350 residues: Phenylalanine--tRNA ligase alpha subunit (350 aa).

Glutamate 257 serves as a coordination point for Mg(2+).

Belongs to the class-II aminoacyl-tRNA synthetase family. Phe-tRNA synthetase alpha subunit type 1 subfamily. As to quaternary structure, tetramer of two alpha and two beta subunits. It depends on Mg(2+) as a cofactor.

Its subcellular location is the cytoplasm. It catalyses the reaction tRNA(Phe) + L-phenylalanine + ATP = L-phenylalanyl-tRNA(Phe) + AMP + diphosphate + H(+). This chain is Phenylalanine--tRNA ligase alpha subunit, found in Listeria monocytogenes serotype 4a (strain HCC23).